The primary structure comprises 1342 residues: DNA-directed RNA polymerase subunit beta (1342 aa).

This sequence belongs to the RNA polymerase beta chain family. In terms of assembly, the RNAP catalytic core consists of 2 alpha, 1 beta, 1 beta' and 1 omega subunit. When a sigma factor is associated with the core the holoenzyme is formed, which can initiate transcription.

The catalysed reaction is RNA(n) + a ribonucleoside 5'-triphosphate = RNA(n+1) + diphosphate. DNA-dependent RNA polymerase catalyzes the transcription of DNA into RNA using the four ribonucleoside triphosphates as substrates. The protein is DNA-directed RNA polymerase subunit beta of Buchnera aphidicola subsp. Schizaphis graminum (strain Sg).